Here is a 684-residue protein sequence, read N- to C-terminus: Protein-glutamine gamma-glutamyltransferase 4 (684 aa).

Catalysis depends on residues cysteine 268, histidine 327, and aspartate 350. The Ca(2+) site is built by asparagine 390, aspartate 392, glutamate 442, and glutamate 447.

The protein belongs to the transglutaminase superfamily. Transglutaminase family. As to quaternary structure, homodimer. The cofactor is Ca(2+). As to expression, prostate.

It catalyses the reaction L-glutaminyl-[protein] + L-lysyl-[protein] = [protein]-L-lysyl-N(6)-5-L-glutamyl-[protein] + NH4(+). Associated with the mammalian reproductive process. Catalyzes the cross-linking of proteins and the conjugation of polyamines to specific proteins in the seminal tract. The protein is Protein-glutamine gamma-glutamyltransferase 4 (TGM4) of Homo sapiens (Human).